The sequence spans 322 residues: Transaldolase (322 aa).

The Schiff-base intermediate with substrate role is filled by K136.

It belongs to the transaldolase family. Type 1 subfamily. In terms of assembly, homodimer.

Its subcellular location is the cytoplasm. It carries out the reaction D-sedoheptulose 7-phosphate + D-glyceraldehyde 3-phosphate = D-erythrose 4-phosphate + beta-D-fructose 6-phosphate. Its pathway is carbohydrate degradation; pentose phosphate pathway; D-glyceraldehyde 3-phosphate and beta-D-fructose 6-phosphate from D-ribose 5-phosphate and D-xylulose 5-phosphate (non-oxidative stage): step 2/3. Functionally, transaldolase is important for the balance of metabolites in the pentose-phosphate pathway. In Xanthomonas euvesicatoria pv. vesicatoria (strain 85-10) (Xanthomonas campestris pv. vesicatoria), this protein is Transaldolase.